The sequence spans 208 residues: Putative dioxygenase RF_0617 (208 aa).

The protein belongs to the intradiol ring-cleavage dioxygenase family.

This is Putative dioxygenase RF_0617 from Rickettsia felis (strain ATCC VR-1525 / URRWXCal2) (Rickettsia azadi).